The primary structure comprises 128 residues: Large ribosomal subunit protein bL17 (128 aa).

This sequence belongs to the bacterial ribosomal protein bL17 family. In terms of assembly, part of the 50S ribosomal subunit. Contacts protein L32.

The chain is Large ribosomal subunit protein bL17 from Streptococcus gordonii (strain Challis / ATCC 35105 / BCRC 15272 / CH1 / DL1 / V288).